Here is a 229-residue protein sequence, read N- to C-terminus: GTP cyclohydrolase 1 (229 aa).

Residues 1–31 form a disordered region; it reads MFRESDNTIAPSNQDLNKPVVDKEQPAERTP. Residues 7 to 16 show a composition bias toward polar residues; it reads NTIAPSNQDL. Residues Cys-117, His-120, and Cys-188 each coordinate Zn(2+).

This sequence belongs to the GTP cyclohydrolase I family. As to quaternary structure, toroid-shaped homodecamer, composed of two pentamers of five dimers.

It carries out the reaction GTP + H2O = 7,8-dihydroneopterin 3'-triphosphate + formate + H(+). It functions in the pathway cofactor biosynthesis; 7,8-dihydroneopterin triphosphate biosynthesis; 7,8-dihydroneopterin triphosphate from GTP: step 1/1. The polypeptide is GTP cyclohydrolase 1 (Rhodopirellula baltica (strain DSM 10527 / NCIMB 13988 / SH1)).